Here is an 86-residue protein sequence, read N- to C-terminus: Large ribosomal subunit protein uL23 (86 aa).

It belongs to the universal ribosomal protein uL23 family. In terms of assembly, part of the 50S ribosomal subunit. Contacts protein L29.

In terms of biological role, binds to 23S rRNA. One of the proteins that surrounds the polypeptide exit tunnel on the outside of the ribosome. The polypeptide is Large ribosomal subunit protein uL23 (Caldivirga maquilingensis (strain ATCC 700844 / DSM 13496 / JCM 10307 / IC-167)).